Consider the following 376-residue polypeptide: WD repeat-containing protein wdr-5.1 (376 aa).

The span at Met1 to Val24 shows a compositional bias: polar residues. Residues Met1–Ser70 are disordered. The segment covering Pro25 to Pro53 has biased composition (low complexity). 7 WD repeats span residues Gly85–Asn115, Gly127–Glu157, Gly169–Asp199, Ala211–Asp241, Asp254–Asp284, Gly296–Asn329, and Gly341–Arg373.

It belongs to the WD repeat WDR5/wds family. As to quaternary structure, component of the SET2 complex (also known as the SET1/COMPASS complex), which contains at least set-2, swd-2.1, cfp-1, rbbp-5, wdr-5.1, dpy-30 and ash-2. Within the complex, interacts with cfp-1, ash-2, dpy-30 and hda-1. Interacts with histone H3 both unmethylated and methylated at 'Lys-4'. Interacts with jmjd-3.1, ceh-6, sox-2, sem-4 and egl-27. Interacts with set-2. In terms of tissue distribution, enriched in the germline. Detected in all nuclei of the embryo. In larvae, expression is detected in the nuclei of seam cells, somatic gonad precursor cells Z1 and Z4, vulval precursor cells, distal tip cells, hypodermal cells, intestinal and muscle cells. Also detected in the neurons from the ventral nerve cord, head and tail region. Expressed in the head and tail region, intestinal cells, muscle cells, cells of the vulva, spermatheca and sheath cells in adults.

It is found in the nucleus. Its function is as follows. Contributes to histone modification. May position the N-terminus of histone H3 for efficient trimethylation at 'Lys-4'. Required for di- and trimethylation, particularly for the trimethylation at 'Lys-4' of histone H3. Not required for demethylation of histone H3 'Lys-27'. H3 'Lys-4' methylation represents a specific tag for epigenetic transcriptional activation, germline establishment, maintenance and function. Implicated in the epigenetic inheritance of lifespan over several generations. Acts in the germline to limit the longevity of the soma, probably by regulating a lipid metabolism pathway that signals from the germline to the intestine, thereby preventing accumulation of mono-unsaturated fatty acids. Required for RNA interference with probable antagonistic role against hpl-2 function. Plays a role in vulval cell fate specification by acting in the synthetic multivulva pathway independent of set-2. Sex determining protein required in the germline to promote the spermatogenesis to oogenesis switch during the late larval stages of development. Acts with the sex determining factor tra-1, and redundantly with wdr-5.2, to regulate fog-3 expression, which in turn determines germ cell fate. Cooperates with jmjd-3.1, egl-27 and unc-3 to ensure robust transdifferentiation of the Y rectal cell to the PDA motor neuron during larval development. The chain is WD repeat-containing protein wdr-5.1 (wdr-5.1) from Caenorhabditis elegans.